A 382-amino-acid chain; its full sequence is Homoserine O-acetyltransferase (382 aa).

The AB hydrolase-1 domain maps to 50–360; it reads NAVLICHALT…DKGHDAFLLD (311 aa). Residue serine 155 is the Nucleophile of the active site. A substrate-binding site is contributed by arginine 225. Catalysis depends on residues aspartate 321 and histidine 354. Aspartate 355 contributes to the substrate binding site.

It belongs to the AB hydrolase superfamily. MetX family. In terms of assembly, homodimer.

It localises to the cytoplasm. It catalyses the reaction L-homoserine + acetyl-CoA = O-acetyl-L-homoserine + CoA. The protein operates within amino-acid biosynthesis; L-methionine biosynthesis via de novo pathway; O-acetyl-L-homoserine from L-homoserine: step 1/1. Its function is as follows. Transfers an acetyl group from acetyl-CoA to L-homoserine, forming acetyl-L-homoserine. This Caulobacter vibrioides (strain ATCC 19089 / CIP 103742 / CB 15) (Caulobacter crescentus) protein is Homoserine O-acetyltransferase.